Here is a 99-residue protein sequence, read N- to C-terminus: DNA-directed RNA polymerase subunit omega (99 aa).

It belongs to the RNA polymerase subunit omega family. In terms of assembly, the RNAP catalytic core consists of 2 alpha, 1 beta, 1 beta' and 1 omega subunit. When a sigma factor is associated with the core the holoenzyme is formed, which can initiate transcription.

It carries out the reaction RNA(n) + a ribonucleoside 5'-triphosphate = RNA(n+1) + diphosphate. Promotes RNA polymerase assembly. Latches the N- and C-terminal regions of the beta' subunit thereby facilitating its interaction with the beta and alpha subunits. The protein is DNA-directed RNA polymerase subunit omega of Xylella fastidiosa (strain Temecula1 / ATCC 700964).